Reading from the N-terminus, the 410-residue chain is Cytochrome P450 monooxygenase mpsF (410 aa).

Position 355 (cysteine 355) interacts with heme.

This sequence belongs to the cytochrome P450 family. Heme serves as cofactor.

It participates in secondary metabolite biosynthesis. Cytochrome P450 monooxygenase; part of the gene cluster that mediates the biosynthesis of macrophasetins, 3-decalinoyltetramic acids (DTAs) which feature a tetramate (pyrrolidine-2,4-dione) unit connected to a decalin fragment and that have potent bioactivities. The PKS-NRPS mpsA together with its associated enoylreductase partner mpsG incorporate one unit of acetyl-CoA, seven units of malonyl-CoA, and one unit of L-alanine to assemble the linear tetramic acid intermediate corresponding to the backbone of macrophasetins. Without the Diels-Alderase mpsD, the mpsA/G product can undergo the non-enzymatic intramolecular Diels-Alder (IMDA) reaction to generate both macrophasetin A and macrophasetin B. Catalyzed by mpsD, the linear tetramic acid intermediate is thoroughly converted to macrophasetin A via the endo-IMDA reaction in a regioselective and stereoselective manner. Finally, the cytochrome P450 monooxygenase mpsF catalyzes the hydroxylation at C20 to yield the end product macrophasetin C. The sequence is that of Cytochrome P450 monooxygenase mpsF from Macrophomina phaseolina (strain MS6) (Charcoal rot fungus).